The sequence spans 192 residues: NADH dehydrogenase [ubiquinone] iron-sulfur protein 3 (192 aa).

The protein belongs to the complex I 30 kDa subunit family. Complex I is composed of about 45 different subunits. This is a component of the iron-sulfur (IP) fragment of the enzyme.

Its subcellular location is the mitochondrion inner membrane. It catalyses the reaction a ubiquinone + NADH + 5 H(+)(in) = a ubiquinol + NAD(+) + 4 H(+)(out). Core subunit of the mitochondrial membrane respiratory chain NADH dehydrogenase (Complex I) that is believed to belong to the minimal assembly required for catalysis. Complex I functions in the transfer of electrons from NADH to the respiratory chain. The immediate electron acceptor for the enzyme is believed to be ubiquinone. This Patellifolia webbiana (Patellaria webbiana) protein is NADH dehydrogenase [ubiquinone] iron-sulfur protein 3 (NAD9).